Consider the following 495-residue polypeptide: Alpha,alpha-trehalose-phosphate synthase [UDP-forming] 56 kDa subunit (495 aa).

D-glucose 6-phosphate is bound by residues Tyr-102 and Asp-156. Residues Arg-293 and Lys-298 each contribute to the UDP site. Positions 293 and 298 each coordinate UDP-alpha-D-glucose. Arg-331 is a D-glucose 6-phosphate binding site. UDP-binding positions include Ile-370 and 396 to 400 (LVSYE). UDP-alpha-D-glucose contacts are provided by residues Ile-370 and 392–400 (DGMNLVSYE).

Belongs to the glycosyltransferase 20 family. As to quaternary structure, the trehalose synthase complex is composed of the two catalytic subunits TPS1 and TPS2 and at least one of the two regulatory subunits TPS3 or TSL1.

It localises to the cytoplasm. It carries out the reaction D-glucose 6-phosphate + UDP-alpha-D-glucose = alpha,alpha-trehalose 6-phosphate + UDP + H(+). The protein operates within carbohydrate biosynthesis. Its activity is regulated as follows. Activated by fructose 6-phosphate. Inorganic phosphate inhibits the synthase activity in the complex, but activates the synthase activity in the free monomeric form. Its function is as follows. Synthase catalytic subunit of the trehalose synthase complex that catalyzes the production of trehalose from glucose-6-phosphate and UDP-alpha-D-glucose in a two step process. Can function independently of the complex. The chain is Alpha,alpha-trehalose-phosphate synthase [UDP-forming] 56 kDa subunit from Saccharomyces cerevisiae (strain ATCC 204508 / S288c) (Baker's yeast).